The chain runs to 137 residues: MLQPKRTKFRKQMTGHNRGLAHRGSKVSFGEYALKATGRGRLTARQIESARRALTRHVKRGGKIWIRVFPDKPVTKKPLEVRMGKGKGGVEYWVAQIQPGKVLYEIEGVSEELAREAFALAAAKLPLATSFVKRTVM.

The protein belongs to the universal ribosomal protein uL16 family. Part of the 50S ribosomal subunit.

Functionally, binds 23S rRNA and is also seen to make contacts with the A and possibly P site tRNAs. This is Large ribosomal subunit protein uL16 from Pseudomonas paraeruginosa (strain DSM 24068 / PA7) (Pseudomonas aeruginosa (strain PA7)).